A 342-amino-acid chain; its full sequence is Forkhead box protein D5-C (342 aa).

The tract at residues 1–89 (MNLSQDSSAH…KHSLDTTTNG (89 aa)) is disordered. A compositionally biased stretch (acidic residues) spans 20 to 34 (SDDEDEIDILGEDDP). Residues 59–70 (SKLSCNESASHS) are compositionally biased toward polar residues. Residues 71 to 83 (SGERERGTSKHSL) show a composition bias toward basic and acidic residues. The segment at residues 97 to 191 (KPPYSYIALI…DNGSFLRRRK (95 aa)) is a DNA-binding region (fork-head).

At the onset of gastrulation, expressed in the superficial layer of cells in the dorsal blastopore lip (Spemann organizer). In the open neural plate, expressed in a row of cells destined to become the floor plate of the neural tube. After neural tube closure, only detected in the tailtip and a small area located at the midbrain/hindbrain boundary.

It localises to the nucleus. Functionally, transcriptional repressor. The sequence is that of Forkhead box protein D5-C (foxd5-c) from Xenopus laevis (African clawed frog).